Consider the following 535-residue polypeptide: Cytochrome c oxidase subunit 1 (535 aa).

A helical membrane pass occupies residues 21–43 (VLYFIFALFSAMIGTGLSAIIRL). Glutamate 44 and glycine 49 together coordinate Ca(2+). The next 6 helical transmembrane spans lie at 63–85 (VITA…GGFG), 106–128 (ISFW…EAGA), 153–175 (IFSL…TTFI), 188–210 (PLFA…VLAA), 242–264 (YWWN…SHAV), and 271–293 (PVFG…FCVW). Residue histidine 67 coordinates Fe(II)-heme a. Histidine 246 serves as a coordination point for Cu cation. The segment at residues 246-250 (HPEVY) is a cross-link (1'-histidyl-3'-tyrosine (His-Tyr)). Tyrosine 250 contributes to the O2 binding site. Positions 295 and 296 each coordinate Cu cation. The next 2 membrane-spanning stretches (helical) occupy residues 308-330 (AYFT…SWLA) and 342-364 (TALF…VVLA). Residues histidine 373 and aspartate 374 each contribute to the Mg(2+) site. 3 consecutive transmembrane segments (helical) span residues 379-401 (VAHF…WYLW), 414-436 (LSHI…MHFL), and 456-478 (NQVA…YVVY). Histidine 381 lines the heme a3 pocket. Position 383 (histidine 383) interacts with Fe(II)-heme a.

Belongs to the heme-copper respiratory oxidase family. Component of the cytochrome c oxidase (complex IV, CIV), a multisubunit enzyme composed of a catalytic core of 3 subunits and several supernumerary subunits. The complex exists as a monomer or a dimer and forms supercomplexes (SCs) in the inner mitochondrial membrane with ubiquinol-cytochrome c oxidoreductase (cytochrome b-c1 complex, complex III, CIII). Heme serves as cofactor. It depends on Cu cation as a cofactor.

The protein resides in the mitochondrion inner membrane. It carries out the reaction 4 Fe(II)-[cytochrome c] + O2 + 8 H(+)(in) = 4 Fe(III)-[cytochrome c] + 2 H2O + 4 H(+)(out). It participates in energy metabolism; oxidative phosphorylation. Functionally, component of the cytochrome c oxidase, the last enzyme in the mitochondrial electron transport chain which drives oxidative phosphorylation. The respiratory chain contains 3 multisubunit complexes succinate dehydrogenase (complex II, CII), ubiquinol-cytochrome c oxidoreductase (cytochrome b-c1 complex, complex III, CIII) and cytochrome c oxidase (complex IV, CIV), that cooperate to transfer electrons derived from NADH and succinate to molecular oxygen, creating an electrochemical gradient over the inner membrane that drives transmembrane transport and the ATP synthase. Cytochrome c oxidase is the component of the respiratory chain that catalyzes the reduction of oxygen to water. Electrons originating from reduced cytochrome c in the intermembrane space (IMS) are transferred via the dinuclear copper A center (CU(A)) of subunit 2 and heme A of subunit 1 to the active site in subunit 1, a binuclear center (BNC) formed by heme A3 and copper B (CU(B)). The BNC reduces molecular oxygen to 2 water molecules using 4 electrons from cytochrome c in the IMS and 4 protons from the mitochondrial matrix. The chain is Cytochrome c oxidase subunit 1 (COX1) from Yarrowia lipolytica (strain CLIB 122 / E 150) (Yeast).